The primary structure comprises 508 residues: ATP synthase subunit alpha, chloroplastic (508 aa).

172–179 (GDRQTGKT) is a binding site for ATP.

The protein belongs to the ATPase alpha/beta chains family. In terms of assembly, F-type ATPases have 2 components, CF(1) - the catalytic core - and CF(0) - the membrane proton channel. CF(1) has five subunits: alpha(3), beta(3), gamma(1), delta(1), epsilon(1). CF(0) has four main subunits: a, b, b' and c.

Its subcellular location is the plastid. It is found in the chloroplast thylakoid membrane. The enzyme catalyses ATP + H2O + 4 H(+)(in) = ADP + phosphate + 5 H(+)(out). Its function is as follows. Produces ATP from ADP in the presence of a proton gradient across the membrane. The alpha chain is a regulatory subunit. This is ATP synthase subunit alpha, chloroplastic from Psilotum nudum (Whisk fern).